The primary structure comprises 540 residues: Glucose-6-phosphate isomerase (540 aa).

Catalysis depends on E350, which acts as the Proton donor. Active-site residues include H381 and K503.

It belongs to the GPI family.

It is found in the cytoplasm. It carries out the reaction alpha-D-glucose 6-phosphate = beta-D-fructose 6-phosphate. It functions in the pathway carbohydrate biosynthesis; gluconeogenesis. Its pathway is carbohydrate degradation; glycolysis; D-glyceraldehyde 3-phosphate and glycerone phosphate from D-glucose: step 2/4. In terms of biological role, catalyzes the reversible isomerization of glucose-6-phosphate to fructose-6-phosphate. The chain is Glucose-6-phosphate isomerase from Burkholderia orbicola (strain MC0-3).